Reading from the N-terminus, the 137-residue chain is MLQPKRTKFRKMHKGRNTGLAHRGSTVAFGQIGLKSLTRGRMTARQIEAARRTITRKIKRGGKIWIRVFPDKPITNKPLEVRMGKGKGPVEYWVCEIKPGKILYELEGISEELAREALTLAASKLPFKTTIVKRTIM.

It belongs to the universal ribosomal protein uL16 family. As to quaternary structure, part of the 50S ribosomal subunit.

Its function is as follows. Binds 23S rRNA and is also seen to make contacts with the A and possibly P site tRNAs. This is Large ribosomal subunit protein uL16 from Psychrobacter arcticus (strain DSM 17307 / VKM B-2377 / 273-4).